The primary structure comprises 332 residues: 2,3-diketo-L-gulonate reductase (332 aa).

H44 acts as the Proton donor in catalysis. NAD(+)-binding positions include 168–174, 224–225, and 304–306; these read ITMVDMS, WK, and GHE.

It belongs to the LDH2/MDH2 oxidoreductase family. DlgD subfamily. Homodimer.

The protein localises to the cytoplasm. It catalyses the reaction 3-dehydro-L-gulonate + NAD(+) = 2,3-dioxo-L-gulonate + NADH + H(+). The catalysed reaction is 3-dehydro-L-gulonate + NADP(+) = 2,3-dioxo-L-gulonate + NADPH + H(+). In terms of biological role, catalyzes the reduction of 2,3-diketo-L-gulonate in the presence of NADH, to form 3-keto-L-gulonate. The chain is 2,3-diketo-L-gulonate reductase from Salmonella paratyphi B (strain ATCC BAA-1250 / SPB7).